Here is a 359-residue protein sequence, read N- to C-terminus: UDP-3-O-acylglucosamine N-acyltransferase (359 aa).

Residue His-256 is the Proton acceptor of the active site.

Belongs to the transferase hexapeptide repeat family. LpxD subfamily. As to quaternary structure, homotrimer.

It carries out the reaction a UDP-3-O-[(3R)-3-hydroxyacyl]-alpha-D-glucosamine + a (3R)-hydroxyacyl-[ACP] = a UDP-2-N,3-O-bis[(3R)-3-hydroxyacyl]-alpha-D-glucosamine + holo-[ACP] + H(+). It participates in bacterial outer membrane biogenesis; LPS lipid A biosynthesis. In terms of biological role, catalyzes the N-acylation of UDP-3-O-acylglucosamine using 3-hydroxyacyl-ACP as the acyl donor. Is involved in the biosynthesis of lipid A, a phosphorylated glycolipid that anchors the lipopolysaccharide to the outer membrane of the cell. The sequence is that of UDP-3-O-acylglucosamine N-acyltransferase from Rhodopseudomonas palustris (strain BisB5).